Here is a 290-residue protein sequence, read N- to C-terminus: Ribosomal RNA small subunit methyltransferase A (290 aa).

Residues asparagine 27, leucine 29, glycine 54, glutamate 75, aspartate 100, and asparagine 125 each contribute to the S-adenosyl-L-methionine site.

The protein belongs to the class I-like SAM-binding methyltransferase superfamily. rRNA adenine N(6)-methyltransferase family. RsmA subfamily.

It localises to the cytoplasm. It catalyses the reaction adenosine(1518)/adenosine(1519) in 16S rRNA + 4 S-adenosyl-L-methionine = N(6)-dimethyladenosine(1518)/N(6)-dimethyladenosine(1519) in 16S rRNA + 4 S-adenosyl-L-homocysteine + 4 H(+). Its function is as follows. Specifically dimethylates two adjacent adenosines (A1518 and A1519) in the loop of a conserved hairpin near the 3'-end of 16S rRNA in the 30S particle. May play a critical role in biogenesis of 30S subunits. The sequence is that of Ribosomal RNA small subunit methyltransferase A from Streptococcus thermophilus (strain CNRZ 1066).